A 616-amino-acid polypeptide reads, in one-letter code: Glucoamylase P (616 aa).

An N-terminal signal peptide occupies residues 1–29 (MRLLPSSCAGALSLLCSLAIAAPTELKAR). Trp-149 serves as a coordination point for substrate. Asn-200 is a glycosylation site (N-linked (GlcNAc...) asparagine). Asp-205 acts as the Proton acceptor in catalysis. Catalysis depends on Glu-208, which acts as the Proton donor. N-linked (GlcNAc...) asparagine glycosylation is present at Asn-427. The CBM20 domain occupies 501-608 (VTSSCQVSIT…AVTTDDAWMG (108 aa)).

Belongs to the glycosyl hydrolase 15 family.

The protein resides in the secreted. The catalysed reaction is Hydrolysis of terminal (1-&gt;4)-linked alpha-D-glucose residues successively from non-reducing ends of the chains with release of beta-D-glucose.. The chain is Glucoamylase P (GAMP) from Amorphotheca resinae (Creosote fungus).